A 540-amino-acid polypeptide reads, in one-letter code: Chaperonin GroEL (540 aa).

Residues 30–33 (TLGP), 87–91 (DGTTT), Gly-415, and Asp-496 each bind ATP.

It belongs to the chaperonin (HSP60) family. Forms a cylinder of 14 subunits composed of two heptameric rings stacked back-to-back. Interacts with the co-chaperonin GroES.

The protein resides in the cytoplasm. It catalyses the reaction ATP + H2O + a folded polypeptide = ADP + phosphate + an unfolded polypeptide.. Functionally, together with its co-chaperonin GroES, plays an essential role in assisting protein folding. The GroEL-GroES system forms a nano-cage that allows encapsulation of the non-native substrate proteins and provides a physical environment optimized to promote and accelerate protein folding. This is Chaperonin GroEL from Symbiobacterium thermophilum (strain DSM 24528 / JCM 14929 / IAM 14863 / T).